A 145-amino-acid polypeptide reads, in one-letter code: Protein X (145 aa).

The segment at 68–117 (PCALRFTSARRMETTVNAHQVLPKVLHKRTLGLSAMSTTDLEAYFKDCVF) is mitochondrial targeting sequence.

It belongs to the orthohepadnavirus protein X family. As to quaternary structure, may form homodimer. May interact with host CEBPA, CFLAR, CREB1, DDB1, E4F1, HBXIP, HSPD1/HSP60, NFKBIA, POLR2E and SMAD4. Interacts with host SMC5-SMC6 complex and induces its degradation. Interacts with host TRPC4AP; leading to prevent ubiquitination of TRPC4AP. Interacts with host PLSCR1; this interaction promotes ubiquitination and degradation of HBx and impairs HBx-mediated cell proliferation. In terms of processing, a fraction may be phosphorylated in insect cells and HepG2 cells, a human hepatoblastoma cell line. Phosphorylated in vitro by host protein kinase C or mitogen-activated protein kinase. N-acetylated in insect cells.

Its subcellular location is the host cytoplasm. It localises to the host nucleus. The protein resides in the host mitochondrion. Multifunctional protein that plays a role in silencing host antiviral defenses and promoting viral transcription. Does not seem to be essential for HBV infection. May be directly involved in development of cirrhosis and liver cancer (hepatocellular carcinoma). Most of cytosolic activities involve modulation of cytosolic calcium. The effect on apoptosis is controversial depending on the cell types in which the studies have been conducted. May induce apoptosis by localizing in mitochondria and causing loss of mitochondrial membrane potential. May also modulate apoptosis by binding host CFLAR, a key regulator of the death-inducing signaling complex (DISC). Promotes viral transcription by using the host E3 ubiquitin ligase DDB1 to target the SMC5-SMC6 complex to proteasomal degradation. This host complex would otherwise bind to viral episomal DNA, and prevents its transcription. Moderately stimulates transcription of many different viral and cellular transcription elements. Promoters and enhancers stimulated by HBx contain DNA binding sites for NF-kappa-B, AP-1, AP-2, c-EBP, ATF/CREB, or the calcium-activated factor NF-AT. This is Protein X from Homo sapiens (Human).